A 209-amino-acid chain; its full sequence is Protein ASG7 (209 aa).

Residues 1 to 49 (MTTLASSIEHKTKHLAAPFENDENPWMKKYCCQCKSCKMSVPVQPWLPR) lie on the Lumenal side of the membrane. The helical transmembrane segment at 50 to 70 (FFVFGILCPVFWLVNLLAWWF) threads the bilayer. Over 71–184 (LQYWQPHELE…LLRKTFRDWN (114 aa)) the chain is Cytoplasmic. Serine 121, serine 123, and serine 125 each carry phosphoserine. Position 153 is a phosphothreonine (threonine 153). The chain crosses the membrane as a helical span at residues 185 to 205 (LRSLLGLLIDSILIIFVVLLC). Residues 206-209 (KKSR) are Lumenal-facing.

Its subcellular location is the endomembrane system. Required for receptor inhibition of inappropriately expressed a-factor receptor (STE3) in MAT a cells. Inhibits signaling by relocalizing the G protein beta-gamma (STE4-STE18) subunit to intracellular membranes. May also be a mechanism for the down-regulation of the mating pheromone response after the zygotic fusion event, promoting the transition of the new diploid cell to vegetative growth. The chain is Protein ASG7 (ASG7) from Saccharomyces cerevisiae (strain ATCC 204508 / S288c) (Baker's yeast).